The following is a 594-amino-acid chain: ATP-dependent lipid A-core flippase (594 aa).

The next 6 membrane-spanning stretches (helical) occupy residues 35 to 55 (FVLA…IPKV), 64 to 84 (FGGS…GVAL), 135 to 155 (AVIF…ITLV), 161 to 181 (VVAL…VVAV), 262 to 282 (VTAF…MIQA), and 289 to 309 (IGGF…LKHL). The ABC transmembrane type-1 domain occupies 36 to 318 (VLAIIAMGLV…LADLNQPLQR (283 aa)). The ABC transporter domain occupies 350–588 (LVFDNVGFRY…NGLYAGLHRI (239 aa)). 384–391 (GPSGSGKT) is an ATP binding site.

This sequence belongs to the ABC transporter superfamily. Lipid exporter (TC 3.A.1.106) family. In terms of assembly, homodimer.

Its subcellular location is the cell inner membrane. It catalyses the reaction ATP + H2O + lipid A-core oligosaccharideSide 1 = ADP + phosphate + lipid A-core oligosaccharideSide 2.. Involved in lipopolysaccharide (LPS) biosynthesis. Translocates lipid A-core from the inner to the outer leaflet of the inner membrane. Transmembrane domains (TMD) form a pore in the inner membrane and the ATP-binding domain (NBD) is responsible for energy generation. In Cupriavidus metallidurans (strain ATCC 43123 / DSM 2839 / NBRC 102507 / CH34) (Ralstonia metallidurans), this protein is ATP-dependent lipid A-core flippase.